A 314-amino-acid polypeptide reads, in one-letter code: tRNA pseudouridine synthase B (314 aa).

Aspartate 54 (nucleophile) is an active-site residue.

It belongs to the pseudouridine synthase TruB family. Type 1 subfamily.

It carries out the reaction uridine(55) in tRNA = pseudouridine(55) in tRNA. Its function is as follows. Responsible for synthesis of pseudouridine from uracil-55 in the psi GC loop of transfer RNAs. This Ralstonia nicotianae (strain ATCC BAA-1114 / GMI1000) (Ralstonia solanacearum) protein is tRNA pseudouridine synthase B.